A 366-amino-acid chain; its full sequence is Chorismate synthase (366 aa).

Arg-48 and Arg-54 together coordinate NADP(+). FMN is bound by residues 125–127 (RSS), 238–239 (NA), Gly-278, 293–297 (KPTSS), and Arg-319.

It belongs to the chorismate synthase family. As to quaternary structure, homotetramer. The cofactor is FMNH2.

The catalysed reaction is 5-O-(1-carboxyvinyl)-3-phosphoshikimate = chorismate + phosphate. It functions in the pathway metabolic intermediate biosynthesis; chorismate biosynthesis; chorismate from D-erythrose 4-phosphate and phosphoenolpyruvate: step 7/7. Catalyzes the anti-1,4-elimination of the C-3 phosphate and the C-6 proR hydrogen from 5-enolpyruvylshikimate-3-phosphate (EPSP) to yield chorismate, which is the branch point compound that serves as the starting substrate for the three terminal pathways of aromatic amino acid biosynthesis. This reaction introduces a second double bond into the aromatic ring system. In Pseudoalteromonas atlantica (strain T6c / ATCC BAA-1087), this protein is Chorismate synthase.